The following is a 669-amino-acid chain: MIKNANIHFNHQGTPVANDFDDIYYSDDNGLAESYYVFYQQNNIDTRLQSHDQAHFVIAETGFGTGLNFLNTCQHFTDHLARQQVQKQLNYGVKRLHFIAFEKHPLSVSDLSKILTAWPELNLLSEQLISQYPINLAGCHRLEFNNGTIVLDLYFGDALESIKTMSYPRSGIVDAWFLDGFAPSKNPDMWQQSLFNAMVNISKVGATLATFTAAGFVRRGLSDAGFTMQKVKGFAHKRSMLIGTLKHTNDTQSAPSYFNHDVSPLSNVAVIGGGIASSCILYSLAKRGISSQLFCQDAAPAMGASHNVQGAVYPHLQAKNSPHSELFAHSFLYAKRLYKQLLNDGFSFDHSWCGVLQHAVKQPLVDRHENLAQQQLWPQTLMRNVTAEQGDTIAGVTTGYSGVYFEQGGWVNPPQLVNAMLSAAHCLSPYKSTFNCHIEQLKKTSNGWLLFSNGKQFGPFSDVIICAGEHSDAFAQTKALPIVGVRGQVSHVQASEQSTKLKTVLCHKGYFTPAYLDHHCMGATFEKNTKSRQVTEQDNLSNREQLLNFYGHCNFATSLGNITAAKAAVRCSFIDHLPMAGEWVEQSDYLTAFANLRLGKRYQYQALSKKQQGLHIFTGFGARALCSAPLCSEHLISSLNNEPRPLSERVSQAIHPARFIVRDLIRNKI.

Positions 1–246 are tRNA (mnm(5)s(2)U34)-methyltransferase; that stretch reads MIKNANIHFN…KRSMLIGTLK (246 aa). The tract at residues 271–669 is FAD-dependent cmnm(5)s(2)U34 oxidoreductase; sequence IGGGIASSCI…IVRDLIRNKI (399 aa).

This sequence in the N-terminal section; belongs to the methyltransferase superfamily. tRNA (mnm(5)s(2)U34)-methyltransferase family. It in the C-terminal section; belongs to the DAO family. The cofactor is FAD.

It is found in the cytoplasm. It catalyses the reaction 5-aminomethyl-2-thiouridine(34) in tRNA + S-adenosyl-L-methionine = 5-methylaminomethyl-2-thiouridine(34) in tRNA + S-adenosyl-L-homocysteine + H(+). Catalyzes the last two steps in the biosynthesis of 5-methylaminomethyl-2-thiouridine (mnm(5)s(2)U) at the wobble position (U34) in tRNA. Catalyzes the FAD-dependent demodification of cmnm(5)s(2)U34 to nm(5)s(2)U34, followed by the transfer of a methyl group from S-adenosyl-L-methionine to nm(5)s(2)U34, to form mnm(5)s(2)U34. The protein is tRNA 5-methylaminomethyl-2-thiouridine biosynthesis bifunctional protein MnmC of Pseudoalteromonas translucida (strain TAC 125).